We begin with the raw amino-acid sequence, 425 residues long: UPF0597 protein VP2173 (425 aa).

This sequence belongs to the UPF0597 family.

The protein is UPF0597 protein VP2173 of Vibrio parahaemolyticus serotype O3:K6 (strain RIMD 2210633).